The following is a 449-amino-acid chain: Glucose-6-phosphate isomerase (449 aa).

Catalysis depends on glutamate 291, which acts as the Proton donor. Catalysis depends on residues histidine 312 and lysine 426.

Belongs to the GPI family.

It is found in the cytoplasm. The catalysed reaction is alpha-D-glucose 6-phosphate = beta-D-fructose 6-phosphate. The protein operates within carbohydrate biosynthesis; gluconeogenesis. Its pathway is carbohydrate degradation; glycolysis; D-glyceraldehyde 3-phosphate and glycerone phosphate from D-glucose: step 2/4. Functionally, catalyzes the reversible isomerization of glucose-6-phosphate to fructose-6-phosphate. The polypeptide is Glucose-6-phosphate isomerase (Streptococcus pyogenes serotype M2 (strain MGAS10270)).